Reading from the N-terminus, the 159-residue chain is MTIEPRATADLVDDIGPDVRSCDLQLRQFGGRPEFAGRVTTVRCFQDNALLKSVLSEPGDGGVLVIDGDGSLHTALVGDVIAALGRDNGWSGLIINGAVRDASTLRTLDIGIKALGTNPRKSTKTGAGERDVPVEFGGVTFTPGDVAYSDDDGIVIVTP.

Residues 78 to 81 and Arg100 contribute to the substrate site; that span reads GDVI. Asp101 serves as a coordination point for a divalent metal cation.

Belongs to the class II aldolase/RraA-like family. As to quaternary structure, homotrimer. Requires a divalent metal cation as cofactor.

It carries out the reaction 4-hydroxy-4-methyl-2-oxoglutarate = 2 pyruvate. The enzyme catalyses oxaloacetate + H(+) = pyruvate + CO2. In terms of biological role, catalyzes the aldol cleavage of 4-hydroxy-4-methyl-2-oxoglutarate (HMG) into 2 molecules of pyruvate. Also contains a secondary oxaloacetate (OAA) decarboxylase activity due to the common pyruvate enolate transition state formed following C-C bond cleavage in the retro-aldol and decarboxylation reactions. This is Putative 4-hydroxy-4-methyl-2-oxoglutarate aldolase from Mycobacterium sp. (strain JLS).